The chain runs to 285 residues: NAD kinase (285 aa).

Residue Asp68 is the Proton acceptor of the active site. NAD(+) contacts are provided by residues 68 to 69 (DG), 142 to 143 (ND), Arg153, Arg170, Asp172, and Gln242.

It belongs to the NAD kinase family. Requires a divalent metal cation as cofactor.

It is found in the cytoplasm. It carries out the reaction NAD(+) + ATP = ADP + NADP(+) + H(+). In terms of biological role, involved in the regulation of the intracellular balance of NAD and NADP, and is a key enzyme in the biosynthesis of NADP. Catalyzes specifically the phosphorylation on 2'-hydroxyl of the adenosine moiety of NAD to yield NADP. This is NAD kinase from Acidobacterium capsulatum (strain ATCC 51196 / DSM 11244 / BCRC 80197 / JCM 7670 / NBRC 15755 / NCIMB 13165 / 161).